The primary structure comprises 128 residues: uncharacterized protein (128 aa).

This is an uncharacterized protein from Vaccinia virus (strain Copenhagen) (VACV).